The primary structure comprises 354 residues: Elongation factor Ts, mitochondrial (354 aa).

A mitochondrion-targeting transit peptide spans 1-47 (MMRSTLSLLQKCRLPNNNGSLLSFKNNQVVNQTALFSMKSNQQYRFY).

The protein belongs to the EF-Ts family.

The protein localises to the mitochondrion. Functionally, associates with the EF-Tu.GDP complex and induces the exchange of GDP to GTP. It remains bound to the aminoacyl-tRNA.EF-Tu.GTP complex up to the GTP hydrolysis stage on the ribosome. The polypeptide is Elongation factor Ts, mitochondrial (tsfm) (Heterostelium pallidum (strain ATCC 26659 / Pp 5 / PN500) (Cellular slime mold)).